Consider the following 341-residue polypeptide: 4-hydroxythreonine-4-phosphate dehydrogenase (341 aa).

Thr-126 contacts substrate. Residues His-161, His-206, and His-272 each contribute to the a divalent metal cation site. 3 residues coordinate substrate: Lys-280, Asn-289, and Arg-298.

It belongs to the PdxA family. As to quaternary structure, homodimer. It depends on a divalent metal cation as a cofactor.

The protein resides in the cytoplasm. It catalyses the reaction 4-(phosphooxy)-L-threonine + NAD(+) = 3-amino-2-oxopropyl phosphate + CO2 + NADH. The protein operates within cofactor biosynthesis; pyridoxine 5'-phosphate biosynthesis; pyridoxine 5'-phosphate from D-erythrose 4-phosphate: step 4/5. Functionally, catalyzes the NAD(P)-dependent oxidation of 4-(phosphooxy)-L-threonine (HTP) into 2-amino-3-oxo-4-(phosphooxy)butyric acid which spontaneously decarboxylates to form 3-amino-2-oxopropyl phosphate (AHAP). In Thermosynechococcus vestitus (strain NIES-2133 / IAM M-273 / BP-1), this protein is 4-hydroxythreonine-4-phosphate dehydrogenase.